Consider the following 297-residue polypeptide: Large ribosomal subunit protein uL18 (297 aa).

Residue Gly-2 is modified to N-acetylglycine. Residues Lys-5 and Lys-48 each carry the N6-acetyllysine modification. Phosphoserine is present on Ser-185. Lys-220 bears the N6-acetyllysine; alternate mark. Lys-220 is covalently cross-linked (Glycyl lysine isopeptide (Lys-Gly) (interchain with G-Cter in SUMO1); alternate). Residue Lys-220 forms a Glycyl lysine isopeptide (Lys-Gly) (interchain with G-Cter in SUMO2); alternate linkage. Thr-232 is subject to Phosphothreonine. The tract at residues Tyr-253 to Ser-297 is disordered. Positions Lys-258–Arg-268 are enriched in basic residues. At Ser-272 the chain carries Phosphoserine.

It belongs to the universal ribosomal protein uL18 family. In terms of assembly, component of the large ribosomal subunit (LSU). Part of the 5S RNP complex, which is a LSU subcomplex composed of the 5S RNA, RPL5 and RPL11. Component of a hexameric 5S RNP precursor complex, composed of 5S RNA, RRS1, RPF2/BXDC1, RPL5, RPL11 and HEATR3; this complex acts as a precursor for ribosome assembly. Interacts with isoform 1 of NVL in an ATP-dependent manner. Interacts with RRP1B. Interacts with IPO5, IPO7 and KPNB1; these interactions may be involved in RPL5 nuclear import for the assembly of ribosomal subunits.

Its subcellular location is the cytoplasm. It is found in the nucleus. It localises to the nucleolus. Functionally, component of the ribosome, a large ribonucleoprotein complex responsible for the synthesis of proteins in the cell. The small ribosomal subunit (SSU) binds messenger RNAs (mRNAs) and translates the encoded message by selecting cognate aminoacyl-transfer RNA (tRNA) molecules. The large subunit (LSU) contains the ribosomal catalytic site termed the peptidyl transferase center (PTC), which catalyzes the formation of peptide bonds, thereby polymerizing the amino acids delivered by tRNAs into a polypeptide chain. The nascent polypeptides leave the ribosome through a tunnel in the LSU and interact with protein factors that function in enzymatic processing, targeting, and the membrane insertion of nascent chains at the exit of the ribosomal tunnel. As part of the 5S RNP/5S ribonucleoprotein particle it is an essential component of the LSU, required for its formation and the maturation of rRNAs. It also couples ribosome biogenesis to p53/TP53 activation. As part of the 5S RNP it accumulates in the nucleoplasm and inhibits MDM2, when ribosome biogenesis is perturbed, mediating the stabilization and the activation of TP53. The chain is Large ribosomal subunit protein uL18 (RPL5) from Oryctolagus cuniculus (Rabbit).